Reading from the N-terminus, the 498-residue chain is Diacylglycerol O-acyltransferase 1 (498 aa).

A disordered region spans residues M1–T66. Over M1–S92 the chain is Cytoplasmic. An involved in homomerization region spans residues M1–W100. S20 carries the phosphoserine modification. Residues N93–I127 traverse the membrane as a helical segment. The Lumenal portion of the chain corresponds to Q128–S139. An extracellular loop 1 (EL1) region spans residues Q128–S139. The helical transmembrane segment at W140–V165 threads the bilayer. Residues W140–V498 are MBOAT fold. The Cytoplasmic portion of the chain corresponds to G166–E170. A helical transmembrane segment spans residues Q171–L193. At L194–P200 the chain is on the lumenal side. The helical transmembrane segment at V201–V232 threads the bilayer. Topologically, residues K233 to I284 are cytoplasmic. Positions K235–R287 are intracellular loop 1 (IL1). The helical transmembrane segment at R285–M319 threads the bilayer. Topologically, residues K320 to D326 are lumenal. A helical membrane pass occupies residues Y327–L364. Over Q365 to S410 the chain is Cytoplasmic. An intracellular loop 2 (IL2) region spans residues Q365 to S410. The FYXDWWN motif motif lies at F371–N377. Residues W385–H393, Y401, and R415 contribute to the an acyl-CoA site. Positions P391 to L405 are amphipathic helix (AH). Residues K411–S431 traverse the membrane as a helical segment. H426 is a catalytic residue. Over V432 to L439 the chain is Lumenal. A helical transmembrane segment spans residues W440 to F458. Residues F459–Q460 are Cytoplasmic-facing. Residues G461–Y492 traverse the membrane as a helical segment. Y488 is an an acyl-CoA binding site. At D493–V498 the chain is on the lumenal side.

It belongs to the membrane-bound acyltransferase family. Sterol o-acyltransferase subfamily. Homodimer or homotetramer; both forms have similar enzymatic activities.

It is found in the endoplasmic reticulum membrane. The catalysed reaction is an acyl-CoA + a 1,2-diacyl-sn-glycerol = a triacyl-sn-glycerol + CoA. It carries out the reaction all-trans-retinol + an acyl-CoA = an all-trans-retinyl ester + CoA. The enzyme catalyses 1-octadecanoyl-2-(5Z,8Z,11Z,14Z-eicosatetraenoyl)-sn-glycerol + (9Z)-octadecenoyl-CoA = 1-octadecanoyl-2-(5Z,8Z,11Z,14Z)-eicosatetraenoyl-3-(9Z)-octadecenoyl-sn-glycerol + CoA. It catalyses the reaction hexadecane-1,2-diol + 2 hexadecanoyl-CoA = 1,2-O,O-dihexadecanoyl-1,2-hexadecanediol + 2 CoA. The catalysed reaction is hexadecane-1,2-diol + hexadecanoyl-CoA = 2-hydroxyhexadecyl hexadecanoate + CoA. It carries out the reaction 2-(9Z-octadecenoyl)-glycerol + hexadecanoyl-CoA = 1-hexadecanoyl-2-(9Z-octadecenoyl)-sn-glycerol + CoA. The enzyme catalyses 1,2-di-(9Z-octadecenoyl)-sn-glycerol + hexadecanoyl-CoA = 1,2-di-(9Z)-octadecenoyl-3-hexadecanoyl-sn-glycerol + CoA. It catalyses the reaction hexadecan-1-ol + hexadecanoyl-CoA = hexadecanyl hexadecanoate + CoA. The catalysed reaction is all-trans-retinol + hexadecanoyl-CoA = all-trans-retinyl hexadecanoate + CoA. It carries out the reaction 13-cis-retinol + hexadecanoyl-CoA = 13-cis-retinyl hexadecanoate + CoA. The enzyme catalyses 1,2-di-(9Z-octadecenoyl)-sn-glycerol + (9Z)-octadecenoyl-CoA = 1,2,3-tri-(9Z-octadecenoyl)-glycerol + CoA. It catalyses the reaction 1,3-di-(9Z-octadecenoyl)-glycerol + (9Z)-octadecenoyl-CoA = 1,2,3-tri-(9Z-octadecenoyl)-glycerol + CoA. The catalysed reaction is 2,3-di-(9Z)-octadecenoyl-sn-glycerol + (9Z)-octadecenoyl-CoA = 1,2,3-tri-(9Z-octadecenoyl)-glycerol + CoA. It carries out the reaction 1-O-(9Z-octadecenyl)-glycerol + (9Z)-octadecenoyl-CoA = 1-O-(9Z-octadecyl)-3-(9Z-octadecenoyl)-glycerol + CoA. The enzyme catalyses 1-(9Z-octadecenoyl)-glycerol + (9Z)-octadecenoyl-CoA = 1,2-di-(9Z-octadecenoyl)-glycerol + CoA. It catalyses the reaction 2-(9Z-octadecenoyl)-glycerol + (9Z)-octadecenoyl-CoA = 1,2-di-(9Z-octadecenoyl)-sn-glycerol + CoA. The catalysed reaction is 1-O-(9Z-octadecyl)-3-(9Z-octadecenoyl)-glycerol + (9Z)-octadecenoyl-CoA = 1-O-(9Z-octadecenyl)-2,3-di-(9Z-octadecenoyl)glycerol + CoA. It carries out the reaction 1,2-di-(9Z-octadecenoyl)-glycerol + (9Z)-octadecenoate + H(+) = 1,2,3-tri-(9Z-octadecenoyl)-glycerol + H2O. It participates in lipid metabolism; glycerolipid metabolism. Catalyzes the terminal and only committed step in triacylglycerol synthesis by using diacylglycerol and fatty acyl CoA as substrates. Highly expressed in epithelial cells of the small intestine and its activity is essential for the absorption of dietary fats. In liver, plays a role in esterifying exogenous fatty acids to glycerol, and is required to synthesize fat for storage. Also present in female mammary glands, where it produces fat in the milk. May be involved in VLDL (very low density lipoprotein) assembly. In contrast to DGAT2 it is not essential for survival. Functions as the major acyl-CoA retinol acyltransferase (ARAT) in the skin, where it acts to maintain retinoid homeostasis and prevent retinoid toxicity leading to skin and hair disorders. Exhibits additional acyltransferase activities, includin acyl CoA:monoacylglycerol acyltransferase (MGAT), wax monoester and wax diester synthases. Also able to use 1-monoalkylglycerol (1-MAkG) as an acyl acceptor for the synthesis of monoalkyl-monoacylglycerol (MAMAG). The chain is Diacylglycerol O-acyltransferase 1 from Mus musculus (Mouse).